The following is a 557-amino-acid chain: 2-succinyl-5-enolpyruvyl-6-hydroxy-3-cyclohexene-1-carboxylate synthase (557 aa).

It belongs to the TPP enzyme family. MenD subfamily. As to quaternary structure, homodimer. Mg(2+) serves as cofactor. It depends on Mn(2+) as a cofactor. Requires thiamine diphosphate as cofactor.

It catalyses the reaction isochorismate + 2-oxoglutarate + H(+) = 5-enolpyruvoyl-6-hydroxy-2-succinyl-cyclohex-3-ene-1-carboxylate + CO2. It functions in the pathway quinol/quinone metabolism; 1,4-dihydroxy-2-naphthoate biosynthesis; 1,4-dihydroxy-2-naphthoate from chorismate: step 2/7. The protein operates within quinol/quinone metabolism; menaquinone biosynthesis. Functionally, catalyzes the thiamine diphosphate-dependent decarboxylation of 2-oxoglutarate and the subsequent addition of the resulting succinic semialdehyde-thiamine pyrophosphate anion to isochorismate to yield 2-succinyl-5-enolpyruvyl-6-hydroxy-3-cyclohexene-1-carboxylate (SEPHCHC). The chain is 2-succinyl-5-enolpyruvyl-6-hydroxy-3-cyclohexene-1-carboxylate synthase from Staphylococcus aureus (strain MSSA476).